The primary structure comprises 434 residues: Putative D-alanyl-D-alanine carboxypeptidase (434 aa).

Residues 7–25 (YLSLLAVSCSVSAAKYPVL) form a helical; Signal-anchor membrane-spanning segment.

Belongs to the peptidase S12 family. YfeW subfamily.

The protein resides in the cell inner membrane. The catalysed reaction is Preferential cleavage: (Ac)2-L-Lys-D-Ala-|-D-Ala. Also transpeptidation of peptidyl-alanyl moieties that are N-acyl substituents of D-alanine.. Functionally, penicillin-binding protein. Has low DD-carboxypeptidase activity. The polypeptide is Putative D-alanyl-D-alanine carboxypeptidase (Escherichia coli (strain K12)).